The chain runs to 583 residues: Threonine--tRNA ligase (583 aa).

Residues 185-478 (DHRKLGRELD…LVEHYGGAFP (294 aa)) are catalytic. Zn(2+) contacts are provided by Cys-278, His-329, and His-455.

The protein belongs to the class-II aminoacyl-tRNA synthetase family. As to quaternary structure, homodimer. Zn(2+) is required as a cofactor.

Its subcellular location is the cytoplasm. It catalyses the reaction tRNA(Thr) + L-threonine + ATP = L-threonyl-tRNA(Thr) + AMP + diphosphate + H(+). In terms of biological role, catalyzes the attachment of threonine to tRNA(Thr) in a two-step reaction: L-threonine is first activated by ATP to form Thr-AMP and then transferred to the acceptor end of tRNA(Thr). Also edits incorrectly charged L-seryl-tRNA(Thr). The chain is Threonine--tRNA ligase from Borrelia hermsii (strain HS1 / DAH).